The chain runs to 471 residues: Eremophilane O-acetyltransferase ORF8 (471 aa).

Belongs to the fumigaclavine B O-acetyltransferase family. In terms of assembly, monomer.

Its pathway is sesquiterpene biosynthesis. O-acetyltransferase; part of the gene cluster that mediates the biosynthesis of PR-toxin, a bicyclic sesquiterpene belonging to the eremophilane class and acting as a mycotoxin. The first step of the pathway is catalyzed by the aristolochene synthase which performs the cyclization of trans,trans-farnesyl diphosphate (FPP) to the bicyclic sesquiterpene aristolochene. Following the formation of aristolochene, the non-oxygenated aristolochene is converted to the trioxygenated intermediate eremofortin B, via 7-epi-neopetasone. This conversion appears to involve three enzymes, a hydroxysterol oxidase-like enzyme, the quinone-oxidase prx3 that forms the quinone-type-structure in the bicyclic nucleus of aristolochene with the C8-oxo group and the C-3 hydroxyl group, and the P450 monooxygenase ORF6 that introduces the epoxide at the double bond between carbons 1 and 2. No monoxy or dioxy-intermediates have been reported to be released to the broth, so these three early oxidative reactions may be coupled together. Eremofortin B is further oxidized by another P450 monooxygenase, that introduces a second epoxide between carbons 7 and 11 prior to acetylation to eremofortin A by the acetyltransferase ORF8. The second epoxidation may be performed by a second P450 monooxygenase. After the acetylation step, eremofortin A is converted to eremofortin C and then to PR-toxin. First the conversion of eremofortin A to eremofortin C proceeds by oxidation of the side chain of the molecule at C-12 and is catalyzed by the short-chain oxidoreductase prx1. The cytochrome P450 monooxygenase ORF6 is probably also involved in this step. The primary alcohol formed at C-12 is finally oxidized by the short-chain alcohol dehydrogenase prx4 that forms PR-toxin. The protein is Eremophilane O-acetyltransferase ORF8 of Penicillium roqueforti (strain FM164).